Here is a 412-residue protein sequence, read N- to C-terminus: Cysteate synthase (412 aa).

Position 105 is an N6-(pyridoxal phosphate)lysine (K105). Pyridoxal 5'-phosphate contacts are provided by N131 and T382.

The protein belongs to the threonine synthase family. Cysteate synthase subfamily. Homotrimer. It depends on pyridoxal 5'-phosphate as a cofactor.

The enzyme catalyses O-phospho-L-serine + sulfite + H(+) = L-cysteate + phosphate. It participates in cofactor biosynthesis; coenzyme M biosynthesis. In terms of biological role, specifically catalyzes the beta-elimination of phosphate from L-phosphoserine and the beta-addition of sulfite to the dehydroalanine intermediate to produce L-cysteate. The protein is Cysteate synthase of Methanocorpusculum labreanum (strain ATCC 43576 / DSM 4855 / Z).